The sequence spans 49 residues: Large ribosomal subunit protein bL33 (49 aa).

It belongs to the bacterial ribosomal protein bL33 family.

The sequence is that of Large ribosomal subunit protein bL33 from Syntrophotalea carbinolica (strain DSM 2380 / NBRC 103641 / GraBd1) (Pelobacter carbinolicus).